The sequence spans 142 residues: Autophagy-related protein 31 (142 aa).

The protein resides in the cytoplasm. Its subcellular location is the cytoskeleton. It localises to the preautophagosomal structure. Functionally, plays a role in starvation-induced autophagy. Involved in mitophagy. Functions with ATG17 and ATG29 at the preautophagosomal structure (PAS) in order to form normal autophagosomes under starvation conditions. May be involved in microtubule function, such as chromosome segregation and karyogamy. In Eremothecium gossypii (strain ATCC 10895 / CBS 109.51 / FGSC 9923 / NRRL Y-1056) (Yeast), this protein is Autophagy-related protein 31 (CIS1).